The primary structure comprises 131 residues: Small ribosomal subunit protein uS8 (131 aa).

This sequence belongs to the universal ribosomal protein uS8 family. Part of the 30S ribosomal subunit. Contacts proteins S5 and S12.

One of the primary rRNA binding proteins, it binds directly to 16S rRNA central domain where it helps coordinate assembly of the platform of the 30S subunit. The protein is Small ribosomal subunit protein uS8 of Legionella pneumophila (strain Paris).